The sequence spans 562 residues: Potassium-transporting ATPase potassium-binding subunit (562 aa).

A run of 12 helical transmembrane segments spans residues 6-26, 62-82, 132-152, 170-190, 253-273, 283-303, 327-347, 356-376, 379-399, 416-436, 483-503, and 526-546; these read FLLI…LGSF, YALA…ALLM, GLAV…FALI, VFRI…LFFV, FVQM…FGQV, LIWA…YAEL, FGIL…CGAV, ALGG…FGGV, GLYG…LMIG, MTAL…ALAI, LLLA…VLAI, and LFIG…FVPA.

This sequence belongs to the KdpA family. In terms of assembly, the system is composed of three essential subunits: KdpA, KdpB and KdpC.

The protein localises to the cell inner membrane. Functionally, part of the high-affinity ATP-driven potassium transport (or Kdp) system, which catalyzes the hydrolysis of ATP coupled with the electrogenic transport of potassium into the cytoplasm. This subunit binds the periplasmic potassium ions and delivers the ions to the membrane domain of KdpB through an intramembrane tunnel. In Serratia proteamaculans (strain 568), this protein is Potassium-transporting ATPase potassium-binding subunit.